A 366-amino-acid chain; its full sequence is Galactoside alpha-(1,2)-fucosyltransferase 1 (366 aa).

The Cytoplasmic portion of the chain corresponds to 1–8; that stretch reads MWPLSHRH. Residues 9–25 form a helical; Signal-anchor for type II membrane protein membrane-spanning segment; the sequence is LCLAFLLVCVLSAISFF. Topologically, residues 26-366 are lumenal; it reads LHIHQDSFRH…LSPLWTLAEP (341 aa). N-linked (GlcNAc...) asparagine glycans are attached at residues N66, N302, and N328.

This sequence belongs to the glycosyltransferase 11 family.

The protein localises to the golgi apparatus. It localises to the golgi stack membrane. The enzyme catalyses a beta-D-galactosyl-(1-&gt;4)-N-acetyl-beta-D-glucosaminyl derivative + GDP-beta-L-fucose = an alpha-L-Fuc-(1-&gt;2)-beta-D-Gal-(1-&gt;4)-beta-D-GlcNAc derivative + GDP + H(+). It catalyses the reaction a ganglioside GA1 + GDP-beta-L-fucose = a ganglioside Fuc-GA1 + GDP + H(+). The catalysed reaction is a beta-D-Gal-(1-&gt;3)-beta-D-GlcNAc-(1-&gt;3)-beta-D-Gal-(1-&gt;4)-beta-D-Glc-(1&lt;-&gt;1')-Cer(d18:1(4E)) + GDP-beta-L-fucose = alpha-L-fucosyl-(1-&gt;2)- beta-D-galactosyl-(1-&gt;3)-N-acetyl-beta-D-glucosaminyl-(1-&gt;3)-beta-D-galactosyl-(1-&gt;4)-beta-D-glucosyl-(1&lt;-&gt;1')-N-acylsphing-4-enine + GDP + H(+). It carries out the reaction a neolactoside nLc4Cer(d18:1(4E)) + GDP-beta-L-fucose = a neolactoside IV(2)-alpha-Fuc-nLc4Cer(d18:1(4E)) + GDP + H(+). The enzyme catalyses a ganglioside GM1 + GDP-beta-L-fucose = a ganglioside Fuc-GM1 + GDP + H(+). It catalyses the reaction beta-D-galactosyl-(1-&gt;3)-N-acetyl-D-galactosamine + GDP-beta-L-fucose = alpha-L-fucosyl-(1-&gt;2)-beta-D-galactosyl-(1-&gt;3)-N-acetyl-D-galactosamine + GDP + H(+). It participates in protein modification; protein glycosylation. Its function is as follows. Catalyzes the transfer of L-fucose, from a guanosine diphosphate-beta-L-fucose, to the terminal galactose residue of glycoconjugates through an alpha(1,2) linkage leading to H antigen synthesis that is an intermediate substrate in the synthesis of ABO blood group antigens. H antigen is essential for maturation of the glomerular layer of the main olfactory bulb, in cell migration and early cell-cell contacts during tumor associated angiogenesis. Preferentially fucosylates soluble lactose and to a lesser extent fucosylates glycolipids gangliosides GA1 and GM1a. This chain is Galactoside alpha-(1,2)-fucosyltransferase 1, found in Plecturocebus brunneus (Brown titi monkey).